We begin with the raw amino-acid sequence, 317 residues long: uncharacterized protein (317 aa).

Belongs to the asfivirus F317L family.

The protein localises to the virion. This is an uncharacterized protein from African swine fever virus (strain Badajoz 1971 Vero-adapted) (Ba71V).